The primary structure comprises 252 residues: 3-dehydroquinate dehydratase (252 aa).

Residues Ser-21, 46–48 (EWR), and Arg-82 each bind 3-dehydroquinate. The active-site Proton donor/acceptor is the His-143. Lys-170 functions as the Schiff-base intermediate with substrate in the catalytic mechanism. 3-dehydroquinate is bound by residues Arg-213, Ser-232, and Gln-236.

The protein belongs to the type-I 3-dehydroquinase family. As to quaternary structure, homodimer.

It carries out the reaction 3-dehydroquinate = 3-dehydroshikimate + H2O. It participates in metabolic intermediate biosynthesis; chorismate biosynthesis; chorismate from D-erythrose 4-phosphate and phosphoenolpyruvate: step 3/7. Its function is as follows. Involved in the third step of the chorismate pathway, which leads to the biosynthesis of aromatic amino acids. Catalyzes the cis-dehydration of 3-dehydroquinate (DHQ) and introduces the first double bond of the aromatic ring to yield 3-dehydroshikimate. The polypeptide is 3-dehydroquinate dehydratase (Escherichia coli O7:K1 (strain IAI39 / ExPEC)).